We begin with the raw amino-acid sequence, 427 residues long: Glutamate-1-semialdehyde 2,1-aminomutase (427 aa).

N6-(pyridoxal phosphate)lysine is present on K265.

The protein belongs to the class-III pyridoxal-phosphate-dependent aminotransferase family. HemL subfamily. In terms of assembly, homodimer. Requires pyridoxal 5'-phosphate as cofactor.

It localises to the cytoplasm. The catalysed reaction is (S)-4-amino-5-oxopentanoate = 5-aminolevulinate. The protein operates within porphyrin-containing compound metabolism; protoporphyrin-IX biosynthesis; 5-aminolevulinate from L-glutamyl-tRNA(Glu): step 2/2. The polypeptide is Glutamate-1-semialdehyde 2,1-aminomutase (Photorhabdus laumondii subsp. laumondii (strain DSM 15139 / CIP 105565 / TT01) (Photorhabdus luminescens subsp. laumondii)).